Here is a 323-residue protein sequence, read N- to C-terminus: Zinc finger C2HC domain-containing protein 1A (323 aa).

The C2HC/C3H-type 1 zinc finger occupies 14–43; it reads ELLPCKICGRTFFPVALKKHGPICQKTATK. Zn(2+) contacts are provided by Cys18, Cys21, His33, and Cys37. Positions 42–81 are disordered; it reads TKKRKTFDSSRQRAEGTDIPTVKPLKPRPEPPKKPSNWRR. Basic and acidic residues predominate over residues 47 to 57; sequence TFDSSRQRAEG. Residues 117-146 form a C2HC/C3H-type 2 zinc finger; the sequence is DYIQCPYCQRRFNENAADRHINFCKEQAAR. Residues Cys121, Cys124, His136, and Cys140 each coordinate Zn(2+). The interval 149-258 is disordered; that stretch reads NKGKFSTDTK…NPASGVLTSK (110 aa). The span at 177–197 shows a compositional bias: polar residues; that stretch reads SPGTTSSGSSRLPQPSGTSKT. The segment covering 198–214 has biased composition (low complexity); that stretch reads VVGAPSGKVSSVSSSSG. Phosphoserine is present on Ser221. Thr242 is modified (phosphothreonine). Ser290 bears the Phosphoserine mark.

Belongs to the ZC2HC1 family. The cofactor is Zn(2+).

In Bos taurus (Bovine), this protein is Zinc finger C2HC domain-containing protein 1A (ZC2HC1A).